Reading from the N-terminus, the 70-residue chain is Small ribosomal subunit protein bS21 (70 aa).

It belongs to the bacterial ribosomal protein bS21 family.

The chain is Small ribosomal subunit protein bS21 from Helicobacter acinonychis (strain Sheeba).